We begin with the raw amino-acid sequence, 322 residues long: Mas-related G-protein coupled receptor member X1 (322 aa).

The Extracellular portion of the chain corresponds to 1-31 (MDPTISTLDTELTPINGTEETLCYKQTLSLT). Asparagine 16 carries an N-linked (GlcNAc...) asparagine glycan. A helical transmembrane segment spans residues 32–52 (VLTCIVSLVGLTGNAVVLWLL). The Cytoplasmic portion of the chain corresponds to 53–67 (GCRMRRNAFSIYILN). The helical transmembrane segment at 68-88 (LAAADFLFLSGRLIYSLLSFI) threads the bilayer. The Extracellular segment spans residues 89-96 (SIPHTISK). Residues 97-117 (ILYPVMMFSYFAGLSFLSAVS) traverse the membrane as a helical segment. Residues 118–144 (TERCLSVLWPIWYRCHRPTHLSAVVCV) lie on the Cytoplasmic side of the membrane. The helical transmembrane segment at 145 to 165 (LLWALSLLRSILEWMLCGFLF) threads the bilayer. The Extracellular segment spans residues 166–177 (SGADSAWCQTSD). The helical transmembrane segment at 178–198 (FITVAWLIFLCVVLCGSSLVL) threads the bilayer. The Cytoplasmic segment spans residues 199 to 221 (LIRILCGSRKIPLTRLYVTILLT). A helical transmembrane segment spans residues 222-242 (VLVFLLCGLPFGIQFFLFLWI). Residues 243-254 (HVDREVLFCHVH) lie on the Extracellular side of the membrane. The chain crosses the membrane as a helical span at residues 255 to 275 (LVSIFLSALNSSANPIIYFFV). At 276-322 (GSFRQRQNRQNLKLVLQRALQDASEVDEGGGQLPEEILELSGSRLEQ) the chain is on the cytoplasmic side.

The protein belongs to the G-protein coupled receptor 1 family. Mas subfamily. As to expression, uniquely localized in a subset of small dorsal root and trigeminal sensory neurons.

The protein localises to the cell membrane. In terms of biological role, orphan receptor. Probably involved in the function of nociceptive neurons. May regulate nociceptor function and/or development, including the sensation or modulation of pain. Potently activated by enkephalins including BAM22 (bovine adrenal medulla peptide 22) and BAM (8-22). BAM22 is the most potent compound and evoked a large and dose-dependent release of intracellular calcium in stably transfected cells. G(alpha)q proteins are involved in the calcium-signaling pathway. Activated by the antimalarial drug, chloroquine. May mediate chloroquine-induced itch, in a histamine-independent manner. The protein is Mas-related G-protein coupled receptor member X1 (MRGPRX1) of Homo sapiens (Human).